A 164-amino-acid chain; its full sequence is MANPIVGRVWKFGDDINTDAIIPGKYLRTRDMQIFGTHAMEGIDPEFTKKAKPGDIIVAGTNFGCGSSREQAPLALKHSGIACIVAKSFARIFFRNAINIGLPLMEADVECQEGDEIKVDLFKGEVLVPEKGIFKGNKLPDFLLDILNDGGLVAHRKKVKGEHK.

The YLRT signature appears at 26 to 29 (YLRT).

The protein belongs to the LeuD family. LeuD type 2 subfamily. In terms of assembly, heterotetramer of 2 HacA and 2 HacB proteins. Cannot form a complex with LeuC.

It carries out the reaction (2R)-homocitrate = (2R,3S)-homoisocitrate. It catalyses the reaction (2R)-homocitrate = cis-homoaconitate + H2O. The enzyme catalyses (2R,3S)-homoisocitrate = cis-homoaconitate + H2O. The catalysed reaction is cis-(homo)2aconitate + H2O = (2R,3S)-iso(homo)2citrate. It carries out the reaction cis-(homo)3aconitate + H2O = (2R,3S)-iso(homo)3citrate. Its pathway is organic acid metabolism; 2-oxosuberate biosynthesis. In terms of biological role, component of a hydro-lyase with broad substrate specificity for cis-unsaturated tricarboxylic acids. Catalyzes both the reversible dehydration of (R)-homocitrate ((R)-2-hydroxybutane-1,2,4-tricarboxylate) to produce cis-homoaconitate ((Z)-but-1-ene-1,2,4-tricarboxylate), and its hydration to homoisocitrate ((1R,2S)-1-hydroxybutane-1,2,4-tricarboxylate). Is also able to hydrate the analogous longer chain substrates cis-homo(2)-aconitate, cis-homo(3)-aconitate. These reactions are part of the biosynthesis pathway of coenzyme B. The polypeptide is Methanogen homoaconitase small subunit 2 (hacB2) (Methanosarcina acetivorans (strain ATCC 35395 / DSM 2834 / JCM 12185 / C2A)).